A 561-amino-acid chain; its full sequence is MSTSWSDRLQNAADMPANMDKHALKKYRREAYHRVFVNRSLAMEKIKCFGFDMDYTLAVYKSPEYESLGFELTVERLVSIGYPQELLSFAYDSTFPTRGLVFDTLYGNLLKVDAYGNLLVCAHGFNFIRGPETREQYPNKFIQRDDTERFYILNTLFNLPETYLLACLVDFFTNCPRYTSCETGFKDGDLFMSYRSMFQDVRDAVDWVHYKGSLKEKTVENLEKYVVKDGKLPLLLSRMKEVGKVFLATNSDYKYTDKIMTYLFDFPHGPKPGSSHRPWQSYFDLILVDARKPLFFGEGTVLRQVDTKTGKLKIGTYTGPLQHGIVYSGGSSDTICDLLGAKGKDILYIGDHIFGDILKSKKRQGWRTFLVIPELAQELHVWTDKSSLFEELQSLDIFLAELYKHLDSSSNERPDISSIQRRIKKVTHDMDMCYGMMGSLFRSGSRQTLFASQVMRYADLYAASFINLLYYPFSYLFRAAHVLMPHESTVEHTHVDINEMESPLATRNRTSVDFKDTDYKRHQLTRSISEIKPPNLFPLAPQEITHCHDEDDDEEEEEEEE.

D52 functions as the Nucleophile in the catalytic mechanism. 2 residues coordinate GMP: D52 and D54. D52 and D54 together coordinate IMP. The Mg(2+) site is built by D52 and D54. D54 acts as the Proton donor in catalysis. A (2R)-2,3-bisphosphoglycerate-binding site is contributed by R144. Positions 144 and 154 each coordinate ATP. R144 and N154 together coordinate dATP. Adenosine is bound at residue N154. N154 serves as a coordination point for P(1),P(4)-bis(5'-adenosyl) tetraphosphate. Residues R202, D206, K215, T249, and N250 each coordinate GMP. The IMP site is built by R202, D206, K215, T249, N250, S251, and K292. K292 lines the GMP pocket. D351 contributes to the Mg(2+) binding site. K362 provides a ligand contact to (2R)-2,3-bisphosphoglycerate. K362 is a binding site for P(1),P(4)-bis(5'-adenosyl) tetraphosphate. At S418 the chain carries Phosphoserine. Residues M436 and Q453 each contribute to the adenosine site. The ATP site is built by Q453 and R456. Residues Q453 and R456 each contribute to the dATP site. Q453 contacts P(1),P(4)-bis(5'-adenosyl) tetraphosphate. Position 457 (Y457) interacts with (2R)-2,3-bisphosphoglycerate. Y457 serves as a coordination point for P(1),P(4)-bis(5'-adenosyl) tetraphosphate. 3 positions are modified to phosphoserine: S502, S511, and S527. The segment at 538–561 (PLAPQEITHCHDEDDDEEEEEEEE) is disordered. A required for tetramer assembly region spans residues 548 to 561 (HDEDDDEEEEEEEE). The segment covering 550 to 561 (EDDDEEEEEEEE) has biased composition (acidic residues).

Belongs to the 5'(3')-deoxyribonucleotidase family. Homotetramer. It depends on Mg(2+) as a cofactor. Widely expressed.

The protein localises to the cytoplasm. The protein resides in the cytosol. It carries out the reaction a ribonucleoside 5'-phosphate + H2O = a ribonucleoside + phosphate. The catalysed reaction is a 2'-deoxyribonucleoside + a ribonucleoside 5'-phosphate = a ribonucleoside + a 2'-deoxyribonucleoside 5'-phosphate. It catalyses the reaction IMP + H2O = inosine + phosphate. The enzyme catalyses GMP + H2O = guanosine + phosphate. It carries out the reaction dIMP + H2O = 2'-deoxyinosine + phosphate. The catalysed reaction is dGMP + H2O = 2'-deoxyguanosine + phosphate. It catalyses the reaction XMP + H2O = xanthosine + phosphate. The enzyme catalyses inosine + GMP = guanosine + IMP. It carries out the reaction dGMP + inosine = 2'-deoxyguanosine + IMP. The catalysed reaction is dIMP + inosine = 2'-deoxyinosine + IMP. It catalyses the reaction inosine + UMP = uridine + IMP. The enzyme catalyses inosine + CMP = cytidine + IMP. It carries out the reaction inosine + AMP = IMP + adenosine. Allosterically activated by various compounds including ATP, 2,3-BPG/2,3-Bisphosphoglyceric acid and Ap4A/P1,P4-bis(5'-adenosyl) tetraphosphate. Binding of an allosteric activator is a prerequisiste to magnesium and substrate binding. Inhibited by inorganic phosphate. Functionally, broad specificity cytosolic 5'-nucleotidase that catalyzes the dephosphorylation of 6-hydroxypurine nucleoside 5'-monophosphates. In addition, possesses a phosphotransferase activity by which it can transfer a phosphate from a donor nucleoside monophosphate to an acceptor nucleoside, preferably inosine, deoxyinosine and guanosine. Has the highest activities for IMP and GMP followed by dIMP, dGMP and XMP. Could also catalyze the transfer of phosphates from pyrimidine monophosphates but with lower efficiency. Through these activities regulates the purine nucleoside/nucleotide pools within the cell. This is Cytosolic purine 5'-nucleotidase from Homo sapiens (Human).